We begin with the raw amino-acid sequence, 598 residues long: Beta-fructofuranosidase, insoluble isoenzyme 2 (598 aa).

Positions 1–25 are cleaved as a signal peptide; it reads MGVLGSRVAWAWLVQLLLLQQLAGA. The active site involves Asp69. Residues Asn164, Asn189, and Asn348 are each glycosylated (N-linked (GlcNAc...) asparagine).

This sequence belongs to the glycosyl hydrolase 32 family. As to expression, expressed in leaves and flowers. Weakly expressed in seeds. Expressed in growing roots, node and the rapidly elongating zone of the internode.

It localises to the secreted. It is found in the cell wall. It carries out the reaction Hydrolysis of terminal non-reducing beta-D-fructofuranoside residues in beta-D-fructofuranosides.. Cell wall-associated invertase that cleaves sucrose into glucose and fructose and is required for assimilated carbon partitioning during early grain-filling. May be involved in sucrose unloaded in the ovular and stylar vascular tissues for the stimulation of starch synthesis in the developing endosperm during grain-filling. Sugar homeostasis mediated by CIN2/GIF1 plays an important role in constitutive and induced physical and chemical defense against pathogens. The polypeptide is Beta-fructofuranosidase, insoluble isoenzyme 2 (CIN2) (Oryza sativa subsp. japonica (Rice)).